Reading from the N-terminus, the 797-residue chain is Protocadherin beta-11 (797 aa).

The N-terminal stretch at 1–26 is a signal peptide; sequence MENQGTRTQQIRQVLLLFVLLGMSQA. The Extracellular segment spans residues 27 to 690; the sequence is GSETWSFSVA…AQADSLTVYL (664 aa). 5 Cadherin domains span residues 35–133, 138–242, 247–347, 352–451, and 456–561; these read VAEE…SPIF, MLLE…SPEF, YEVK…APEI, ITSP…APTF, and YTLF…SPFV. N-linked (GlcNAc...) asparagine glycans are attached at residues Asn-418, Asn-436, Asn-487, and Asn-567. A Cadherin 6 domain is found at 568 to 671; the sequence is GSAPCTELVP…LVDGFSQPYL (104 aa). Residues 691 to 711 traverse the membrane as a helical segment; it reads VVALASVSSLFLFSVLLFVAV. The Cytoplasmic portion of the chain corresponds to 712-797; that stretch reads RLCRRSRAAS…TFRNSFGFNF (86 aa).

It localises to the cell membrane. Functionally, potential calcium-dependent cell-adhesion protein. May be involved in the establishment and maintenance of specific neuronal connections in the brain. The protein is Protocadherin beta-11 (PCDHB11) of Homo sapiens (Human).